Consider the following 340-residue polypeptide: MAHVAEWKKKEVEELTKIIKSHPVIALVDVAGVPAYPLSKMRDKLRGKALLRVSRNTLIELAIKRAAQELNKPDLEKLADYIEGGAAILATEMNPFKLYKLLEESKTPAPAKPGAVVPKDVVIPAGPTSLAPGPLVGEMQALGIPARIEKGKVTIQKDYTVLKAGEVITEQLARILNALGIEPLEVGLNLLAAYEDDIIYTPDVLAIDEQEYINMLQQAYMHAFNLSVNTAYPTKQTIEAIIQKAYLGAKNVAVEAGYITPETVEDILGRAIRAFLLIAQNLPEELLDEKTKELLNAQAQVAVAAPQPAEEKVEEAEEEEEEEEEASEEEALAGLGALFG.

Residues 305–340 are disordered; it reads APQPAEEKVEEAEEEEEEEEEASEEEALAGLGALFG. Residues 312 to 331 are compositionally biased toward acidic residues; the sequence is KVEEAEEEEEEEEEASEEEA.

Belongs to the universal ribosomal protein uL10 family. In terms of assembly, part of the 50S ribosomal subunit. Forms part of the ribosomal stalk which helps the ribosome interact with GTP-bound translation factors. Forms a heptameric L10(L12)2(L12)2(L12)2 complex, where L10 forms an elongated spine to which the L12 dimers bind in a sequential fashion.

Forms part of the ribosomal stalk, playing a central role in the interaction of the ribosome with GTP-bound translation factors. The chain is Large ribosomal subunit protein uL10 from Thermococcus gammatolerans (strain DSM 15229 / JCM 11827 / EJ3).